The chain runs to 586 residues: Protein CBFA2T2 (586 aa).

The tract at residues 1–95 is disordered; that stretch reads MVGIPGPYQF…SSSSSLANQQ (95 aa). Over residues 56-68 the composition is skewed to polar residues; it reads SSHSNGINHSPPT. Low complexity predominate over residues 77-90; the sequence is QRSSNGPSSSSSSS. The TAFH domain occupies 102 to 197; it reads VRQLSKLKRF…TPSQYLAQHE (96 aa). Disordered regions lie at residues 204 to 242 and 387 to 417; these read STSSPADSSELLMEMNGNGKRHSPDRREEERETAPAEPP and IRKGSEHPSRQHSPSSTDSGASDSVRDFGSR. Positions 228 to 237 are enriched in basic and acidic residues; the sequence is DRREEERETA. The span at 399 to 409 shows a compositional bias: low complexity; the sequence is SPSSTDSGASD. The stretch at 429–481 forms a coiled coil; it reads RKAEEAVNEVKRQAMSEVQKAVSEAEQKAFEMIASERARMEQTIVDAKRRAAE. Residues Cys497, Cys500, Cys508, Cys511, Cys517, Cys521, His529, and Cys533 each coordinate Zn(2+). Residues 497 to 533 form an MYND-type zinc finger; the sequence is CWNCGRKASETCSGCNIARYCGSFCQHKDWEKHHRIC. Residues 561-586 are disordered; that stretch reads SPTLERSSSATSRSSTPASVTAVDGL. Residues 566-586 show a composition bias toward low complexity; the sequence is RSSSATSRSSTPASVTAVDGL.

Its subcellular location is the nucleus. May act as a transcriptional corepressor. The sequence is that of Protein CBFA2T2 (cbfa2t2) from Xenopus laevis (African clawed frog).